Reading from the N-terminus, the 280-residue chain is Protein FLOURY 1-like (280 aa).

A helical membrane pass occupies residues 22 to 42 (GFGFGIFVIGCSSQFFNLVFL). The disordered stretch occupies residues 153–187 (VALSETELDEKNHHGEEEESEDEEESQSQNDEDQL). Positions 169–187 (EEESEDEEESQSQNDEDQL) are enriched in acidic residues. The GTD-binding domain occupies 188-280 (LDVITLRTMV…LDDDEDKIQM (93 aa)).

The protein resides in the membrane. The chain is Protein FLOURY 1-like from Arabidopsis thaliana (Mouse-ear cress).